Reading from the N-terminus, the 451-residue chain is Eukaryotic translation initiation factor 3 subunit E (451 aa).

In terms of domain architecture, PCI spans 256-425 (TDLFFSPAYI…GTVIMNHPPQ (170 aa)).

This sequence belongs to the eIF-3 subunit E family. As to quaternary structure, component of the eukaryotic translation initiation factor 3 (eIF-3) complex.

It is found in the cytoplasm. Its function is as follows. Component of the eukaryotic translation initiation factor 3 (eIF-3) complex, which is involved in protein synthesis of a specialized repertoire of mRNAs and, together with other initiation factors, stimulates binding of mRNA and methionyl-tRNAi to the 40S ribosome. The eIF-3 complex specifically targets and initiates translation of a subset of mRNAs involved in cell proliferation. The chain is Eukaryotic translation initiation factor 3 subunit E (int6) from Aspergillus oryzae (strain ATCC 42149 / RIB 40) (Yellow koji mold).